A 1040-amino-acid chain; its full sequence is MQPEEGTGWLLELLSEVQLQQYFLRLRDDLNITRLSHFEYVKNEDLEKIGMGRPGQRRLWEAVKRRKAMCKRKSWMSKVFSGKRQEAEFPSHHSQSTFRKPSPTPGGLAGEGTLQSLTCLIGEKDLRLLEKLGDGSFGVVRRGEWDAPAGKTVSVAVKCLKPDVLSQPEAMDDFIREVNAMHSLDHRNLIRLYGVVLTPPMKMVTELAPLGSLLDRLRKHQGHFLLGTLSRYAVQVAEGMGYLESKRFIHRDLAARNLLLATRDLVKIGDFGLMRALPQNDGHYVMQEHRKVPFAWCAPESLKTRTFSHASDTWMFGVTLWEMFTYGQEPWIGLNGSQILHKIDKEGERLPRPEDCPQDIYNVMVQCWAHKPEDRPTFVALRDFLLEAQPTDMRALQDFEEPDKLHIQMNDVITVIEGRAENYWWRGQNTRTLCVGPFPRNVVTSVAGLSAQDISQPLQNSFIHTGHGDSDPRHCWGFPDRIDELYLGNPMDPPDLLSVELSTSRPTQHLGRMKKPTYDPVSEDPDPLSSDFKRLGLRKPALPRGLWLAKPSARVPGTKAGRSSGGEVTLIDFGEEPVAPTPRPCAPSLAQLAMDACSLLDKTPPQSPTRALPRPLHPTPVVDWDARPLPPPPAYDDVAQDEDDFEVCSINSTLVSAGLPTGPSQGETNYAFVPEQAQLPPALEDNLFLPPQGGGQPPSSAQTAEIFQALQQECMRQLQVPTGQLTPSPTPGGDDKPQVPPRVPIPPRPTRPRVGLSPAPLGEEEASRWPGPSSPPRVPPREPLSPQGSRTPSPLVPPGSSPLPHRLSSSPGKTMPTTQSFASDPKYATPQVIQAPGPRAGPCILPIVRDGRKVSSTHYYLLPERPPYLERYQRFLREAQSPEEPAALPVPPLLPPPSTPAPAAPTATVRPMPQAAPDPKANFSTNNSNPGAQPPSLRASARLPQRGCPGDGQEAARPADKVQMLQAMVHGVTTEECQAALRSHSWSIQRAAQYLKVEQLFGLGLRPRVECHKVLEMFDWNLEQAGCHLLGSCGPAHHKR.

Residues 1–110 (MQPEEGTGWL…PSPTPGGLAG (110 aa)) are SAM-like domain. A disordered region spans residues 86 to 109 (EAEFPSHHSQSTFRKPSPTPGGLA). Residue threonine 113 is modified to Phosphothreonine. The region spanning 126–385 (LRLLEKLGDG…PTFVALRDFL (260 aa)) is the Protein kinase domain. Residues 132 to 140 (LGDGSFGVV) and lysine 158 contribute to the ATP site. Catalysis depends on aspartate 252, which acts as the Proton acceptor. Position 284 is a phosphotyrosine; by SRC and autocatalysis (tyrosine 284). In terms of domain architecture, SH3 spans 388-448 (AQPTDMRALQ…PRNVVTSVAG (61 aa)). Residues 505 to 527 (RPTQHLGRMKKPTYDPVSEDPDP) are disordered. Position 518 is a phosphotyrosine (tyrosine 518). Residues 623–652 (DWDARPLPPPPAYDDVAQDEDDFEVCSINS) are required for interaction with SRC. The interval 632–635 (PPAY) is required for interaction with NEDD4. The disordered stretch occupies residues 722–824 (TGQLTPSPTP…MPTTQSFASD (103 aa)). The interval 733-876 (GDDKPQVPPR…PYLERYQRFL (144 aa)) is EBD domain. Composition is skewed to pro residues over residues 738–749 (QVPPRVPIPPRP) and 772–783 (PSSPPRVPPREP). Positions 802–812 (PLPHRLSSSPG) are enriched in low complexity. Residue tyrosine 827 is modified to Phosphotyrosine. Arginine 839 carries the post-translational modification Omega-N-methylarginine. Tyrosine 859 and tyrosine 872 each carry phosphotyrosine. Serine 881 is modified (phosphoserine). The segment at 881 to 957 (SPEEPAALPV…CPGDGQEAAR (77 aa)) is disordered. The segment covering 888–903 (LPVPPLLPPPSTPAPA) has biased composition (pro residues). Residues 922-931 (NFSTNNSNPG) are compositionally biased toward polar residues. Residues 958-998 (PADKVQMLQAMVHGVTTEECQAALRSHSWSIQRAAQYLKVE) form the UBA domain.

This sequence belongs to the protein kinase superfamily. Tyr protein kinase family. In terms of assembly, homodimer. Interacts with CDC42. Interacts with CSPG4 (activated). Interacts with MERTK (activated); stimulates autophosphorylation. May interact (phosphorylated) with HSP90AB1; maintains kinase activity. Interacts with NPHP1. Interacts with SNX9 (via SH3 domain). Interacts with SRC (via SH2 and SH3 domain). Interacts with EGFR, and this interaction is dependent on EGF stimulation and kinase activity of EGFR. Interacts (via kinase domain) with AKT1. Part of a collagen stimulated complex involved in cell migration composed of CDC42, CRK, TNK2 and BCAR1/p130cas. Interacts with BCAR1/p130cas via SH3 domains. Forms complexes with GRB2 and numerous receptor tyrosine kinases (RTK) including LTK, AXL or PDGFRL, in which GRB2 promotes RTK recruitment by TNK2. Interacts with NEDD4 (via WW3 domain). NEDD4L and EGF promote association with NEDD4. The cofactor is Mg(2+). Post-translationally, autophosphorylation regulates kinase activity. Phosphorylation on Tyr-518 is required for interaction with SRC and is observed during association with clathrin-coated pits. In terms of processing, polyubiquitinated by NEDD4 and NEDD4L. Degradation can be induced by EGF and is lysosome-dependent.

Its subcellular location is the cell membrane. The protein resides in the nucleus. It localises to the endosome. It is found in the cell junction. The protein localises to the adherens junction. Its subcellular location is the cytoplasmic vesicle membrane. The protein resides in the cytoplasmic vesicle. It localises to the clathrin-coated vesicle. It is found in the membrane. The protein localises to the clathrin-coated pit. Its subcellular location is the cytoplasm. The protein resides in the cytosol. It carries out the reaction L-tyrosyl-[protein] + ATP = O-phospho-L-tyrosyl-[protein] + ADP + H(+). The catalysed reaction is L-seryl-[protein] + ATP = O-phospho-L-seryl-[protein] + ADP + H(+). It catalyses the reaction L-threonyl-[protein] + ATP = O-phospho-L-threonyl-[protein] + ADP + H(+). Its function is as follows. Non-receptor tyrosine-protein and serine/threonine-protein kinase that is implicated in cell spreading and migration, cell survival, cell growth and proliferation. Transduces extracellular signals to cytosolic and nuclear effectors. Phosphorylates AKT1, AR, MCF2, WASL and WWOX. Implicated in trafficking and clathrin-mediated endocytosis through binding to epidermal growth factor receptor (EGFR) and clathrin. Binds to both poly- and mono-ubiquitin and regulates ligand-induced degradation of EGFR, thereby contributing to the accumulation of EGFR at the limiting membrane of early endosomes. Downstream effector of CDC42 which mediates CDC42-dependent cell migration via phosphorylation of BCAR1. May be involved both in adult synaptic function and plasticity and in brain development. Activates AKT1 by phosphorylating it on 'Tyr-176'. Phosphorylates AR on 'Tyr-267' and 'Tyr-363', thereby promoting its recruitment to androgen-responsive enhancers (AREs). Phosphorylates WWOX on 'Tyr-287'. Phosphorylates MCF2, thereby enhancing its activity as a guanine nucleotide exchange factor (GEF) toward Rho family proteins. Contributes to the control of AXL receptor levels. Confers metastatic properties on cancer cells and promotes tumor growth by negatively regulating tumor suppressor such as WWOX and positively regulating pro-survival factors such as AKT1 and AR. This Rattus norvegicus (Rat) protein is Activated CDC42 kinase 1.